We begin with the raw amino-acid sequence, 456 residues long: RNA polymerase II-associated protein 1 homolog (456 aa).

Residues 382–456 (LRSVEGSLNE…PVEQLQNEED (75 aa)) form a disordered region. The residue at position 388 (Ser-388) is a Phosphoserine. The segment covering 396-406 (EEKPAESREQL) has biased composition (basic and acidic residues). Composition is skewed to polar residues over residues 408-433 (SAEQTNGVKPETQAQNMSASESQANS) and 441-456 (GNTQPSPVEQLQNEED).

Belongs to the PAF1 family.

The protein localises to the cytoplasm. The protein resides in the nucleus. The polypeptide is RNA polymerase II-associated protein 1 homolog (Schizosaccharomyces pombe (strain 972 / ATCC 24843) (Fission yeast)).